The sequence spans 341 residues: Probable long-chain-alcohol O-fatty-acyltransferase 9 (341 aa).

7 helical membrane passes run 9–29 (IIVW…SANI), 36–56 (LFSV…FSSV), 82–102 (GPLF…CFPI), 122–142 (FAIK…SHFL), 146–166 (VLLS…LGPL), 231–251 (MGYL…YFYI), and 295–315 (RLLT…PLFI).

It belongs to the wax synthase family.

Its subcellular location is the membrane. It carries out the reaction a long chain fatty alcohol + a fatty acyl-CoA = a wax ester + CoA. Catalyzes the final step in the synthesis of long-chain linear esters (waxes). This is Probable long-chain-alcohol O-fatty-acyltransferase 9 from Arabidopsis thaliana (Mouse-ear cress).